Here is a 193-residue protein sequence, read N- to C-terminus: Large ribosomal subunit protein uL18 (193 aa).

This sequence belongs to the universal ribosomal protein uL18 family. Part of the 50S ribosomal subunit. Contacts the 5S and 23S rRNAs.

In terms of biological role, this is one of the proteins that bind and probably mediate the attachment of the 5S RNA into the large ribosomal subunit, where it forms part of the central protuberance. In Methanococcus vannielii (strain ATCC 35089 / DSM 1224 / JCM 13029 / OCM 148 / SB), this protein is Large ribosomal subunit protein uL18.